The following is a 253-amino-acid chain: Imidazole glycerol phosphate synthase subunit HisF (253 aa).

Catalysis depends on residues D11 and D130.

The protein belongs to the HisA/HisF family. In terms of assembly, heterodimer of HisH and HisF.

The protein localises to the cytoplasm. The enzyme catalyses 5-[(5-phospho-1-deoxy-D-ribulos-1-ylimino)methylamino]-1-(5-phospho-beta-D-ribosyl)imidazole-4-carboxamide + L-glutamine = D-erythro-1-(imidazol-4-yl)glycerol 3-phosphate + 5-amino-1-(5-phospho-beta-D-ribosyl)imidazole-4-carboxamide + L-glutamate + H(+). It functions in the pathway amino-acid biosynthesis; L-histidine biosynthesis; L-histidine from 5-phospho-alpha-D-ribose 1-diphosphate: step 5/9. IGPS catalyzes the conversion of PRFAR and glutamine to IGP, AICAR and glutamate. The HisF subunit catalyzes the cyclization activity that produces IGP and AICAR from PRFAR using the ammonia provided by the HisH subunit. The sequence is that of Imidazole glycerol phosphate synthase subunit HisF from Acidithiobacillus ferrooxidans (strain ATCC 23270 / DSM 14882 / CIP 104768 / NCIMB 8455) (Ferrobacillus ferrooxidans (strain ATCC 23270)).